Here is a 1844-residue protein sequence, read N- to C-terminus: ATPase family AAA domain-containing protein 5 (1844 aa).

Serine 44 is modified (phosphoserine). Lysine 127 is covalently cross-linked (Glycyl lysine isopeptide (Lys-Gly) (interchain with G-Cter in SUMO2)). The segment covering 178 to 199 (QPNTMTSLQNSKKVNPKQGTTK) has biased composition (polar residues). A disordered region spans residues 178-204 (QPNTMTSLQNSKKVNPKQGTTKNDFKK). Phosphoserine occurs at positions 219, 306, 311, 354, and 369. Positions 368 to 384 (KSNVVIQEEELELAVLE) are interaction with WDR48. Disordered stretches follow at residues 477 to 499 (KLKK…REGN), 580 to 623 (ESEA…NSQL), and 658 to 700 (KFTR…SKNI). Polar residues-rich tracts occupy residues 580 to 592 (ESEA…STPK) and 599 to 608 (RISSTPTTET). Residues serine 602, serine 614, and serine 621 each carry the phosphoserine modification. The segment covering 664-673 (TPKKSKKKSN) has biased composition (basic residues). Over residues 685-700 (GFTSQIRKASNTSKNI) the composition is skewed to polar residues. Serine 817 carries the phosphoserine modification. Composition is skewed to basic and acidic residues over residues 987–1032 (LEAD…ELSK) and 1092–1106 (RQNL…HEDF). Disordered regions lie at residues 987–1047 (LEAD…SKDS) and 1092–1118 (RQNL…SSDD). A Phosphoserine modification is found at serine 1116. 1132–1139 (GPTGVGKT) is a binding site for ATP. Disordered stretches follow at residues 1203–1235 (KKIS…LPPK) and 1272–1292 (ITQT…GAEE). A compositionally biased stretch (polar residues) spans 1272 to 1285 (ITQTKSTNATNSNV). The LXCXE motif motif lies at 1428 to 1432 (LVCSE). The disordered stretch occupies residues 1591-1635 (SLSSVSSSSNAEESKTGDEESKARDKGNNPETKKSIPCPPKTTAG). Basic and acidic residues predominate over residues 1602 to 1624 (EESKTGDEESKARDKGNNPETKK). Residues 1630 to 1719 (PKTTAGKKCS…AAAEALSFTK (90 aa)) form an interaction with RAD51 and RFC5 region.

It belongs to the AAA ATPase family. Component of a heteropentameric replication factor ATAD5 RFC-like complex composed of one large subunit (ATAD5) and four small subunits (RFC2, RFC3, RFC4 and RFC5). Within the ATAD5 RFC-like complex, interacts with RFC2, RFC4 and RFC5. Within the ATAD5 RFC-like complex, interacts directly via-N terminal with RAD51; the interactions is enhanced under replication stress. Interacts with RB1 predominantly in G1 phase via its LXCXE motif. Interacts with RAD9A in growing cells. The interaction with RAD9A is reduced after exposure to DNA replication-inhibiting agents. Interacts with BRD4. Interacts with PCNA. Interacts with deubiquitinating enzyme USP1, and its associated factor, WDR48. Post-translationally, ATR may stimulate the RAD9A dissociation.

The protein localises to the nucleus. Functionally, has an important role in DNA replication and in maintaining genome integrity during replication stress. Involved in a RAD9A-related damage checkpoint, a pathway that is important in determining whether DNA damage is compatible with cell survival or whether it requires cell elimination by apoptosis. Modulates the RAD9A interaction with BCL2 and thereby induces DNA damage-induced apoptosis. Promotes PCNA deubiquitination by recruiting the ubiquitin-specific protease 1 (USP1) and WDR48 thereby down-regulating the error-prone damage bypass pathway. As component of the ATAD5 RFC-like complex, regulates the function of the DNA polymerase processivity factor PCNA by unloading the ring-shaped PCNA homotrimer from DNA after replication during the S phase of the cell cycle. This seems to be dependent on its ATPase activity. Plays important roles in restarting stalled replication forks under replication stress, by unloading the PCNA homotrimer from DNA and recruiting RAD51 possibly through an ATR-dependent manner. Ultimately this enables replication fork regression, breakage, and eventual fork restart. Both the PCNA unloading activity and the interaction with WDR48 are required to efficiently recruit RAD51 to stalled replication forks. Promotes the generation of MUS81-mediated single-stranded DNA-associated breaks in response to replication stress, which is an alternative pathway to restart stalled/regressed replication forks. This is ATPase family AAA domain-containing protein 5 from Homo sapiens (Human).